The primary structure comprises 237 residues: Ribosomal RNA small subunit methyltransferase G (237 aa).

S-adenosyl-L-methionine contacts are provided by residues G78, F83, 129 to 130 (AE), and R148.

Belongs to the methyltransferase superfamily. RNA methyltransferase RsmG family.

The protein localises to the cytoplasm. In terms of biological role, specifically methylates the N7 position of a guanine in 16S rRNA. The sequence is that of Ribosomal RNA small subunit methyltransferase G from Streptococcus equi subsp. zooepidemicus (strain MGCS10565).